Reading from the N-terminus, the 153-residue chain is Insulin-like growth factor 1 (153 aa).

A b region spans residues 49-77; the sequence is GPETLCGAELVDALQFVCGDRGFYFNKPT. Disulfide bonds link cysteine 54-cysteine 96, cysteine 66-cysteine 109, and cysteine 95-cysteine 100. Positions 78–89 are c; that stretch reads GYGSSSRRAPQT. An a region spans residues 90 to 110; that stretch reads GIVDECCFRSCDLRRLEMYCA. The tract at residues 111-118 is d; that stretch reads PLKPAKSA. Positions 119 to 153 are cleaved as a propeptide — e peptide; the sequence is RSVRAQRHTDMPKAQKEVHLKNASRGSAGNKNYRM. Residues 120-153 form a disordered region; it reads SVRAQRHTDMPKAQKEVHLKNASRGSAGNKNYRM. Over residues 125–138 the composition is skewed to basic and acidic residues; sequence RHTDMPKAQKEVHL. Residues 142–153 are compositionally biased toward polar residues; the sequence is SRGSAGNKNYRM.

The protein belongs to the insulin family. As to quaternary structure, forms a ternary complex with IGFR1 and ITGAV:ITGB3. Forms a ternary complex with IGFR1 and ITGA6:ITGB4. Forms a ternary complex with IGFBP3 and ALS.

The protein resides in the secreted. In terms of biological role, the insulin-like growth factors, isolated from plasma, are structurally and functionally related to insulin but have a much higher growth-promoting activity. May be a physiological regulator of [1-14C]-2-deoxy-D-glucose (2DG) transport and glycogen synthesis in osteoblasts. Stimulates glucose transport in bone-derived osteoblastic (PyMS) cells and is effective at much lower concentrations than insulin, not only regarding glycogen and DNA synthesis but also with regard to enhancing glucose uptake. May play a role in synapse maturation. Ca(2+)-dependent exocytosis of IGF1 is required for sensory perception of smell in the olfactory bulb. Acts as a ligand for IGF1R. Binds to the alpha subunit of IGF1R, leading to the activation of the intrinsic tyrosine kinase activity which autophosphorylates tyrosine residues in the beta subunit thus initiating a cascade of down-stream signaling events leading to activation of the PI3K-AKT/PKB and the Ras-MAPK pathways. Binds to integrins ITGAV:ITGB3 and ITGA6:ITGB4. Its binding to integrins and subsequent ternary complex formation with integrins and IGFR1 are essential for IGF1 signaling. Induces the phosphorylation and activation of IGFR1, MAPK3/ERK1, MAPK1/ERK2 and AKT1. As part of the MAPK/ERK signaling pathway, acts as a negative regulator of apoptosis in cardiomyocytes via promotion of STUB1/CHIP-mediated ubiquitination and degradation of ICER-type isoforms of CREM. The polypeptide is Insulin-like growth factor 1 (Canis lupus familiaris (Dog)).